The chain runs to 345 residues: Methylthioribose-1-phosphate isomerase (345 aa).

Substrate contacts are provided by residues 44-46, Arg87, and Gln194; that span reads RGA. Asp235 functions as the Proton donor in the catalytic mechanism. Substrate is bound at residue 245 to 246; that stretch reads NK.

The protein belongs to the eIF-2B alpha/beta/delta subunits family. MtnA subfamily.

The catalysed reaction is 5-(methylsulfanyl)-alpha-D-ribose 1-phosphate = 5-(methylsulfanyl)-D-ribulose 1-phosphate. The protein operates within amino-acid biosynthesis; L-methionine biosynthesis via salvage pathway; L-methionine from S-methyl-5-thio-alpha-D-ribose 1-phosphate: step 1/6. Its function is as follows. Catalyzes the interconversion of methylthioribose-1-phosphate (MTR-1-P) into methylthioribulose-1-phosphate (MTRu-1-P). This is Methylthioribose-1-phosphate isomerase from Heliobacterium modesticaldum (strain ATCC 51547 / Ice1).